A 156-amino-acid polypeptide reads, in one-letter code: CD-NTase-associated protein 8 (156 aa).

The protein belongs to the bacterial HORMA family. HORMA3 subfamily. Interacts with Cap7 (also called HORMA2) and CdnC; forms CdnD:Cap7:Cap8 (also called CdnD:HORMA2:HORMA3) complexes with stoichiometries of 1:1:1 and 2:1:1.

Functionally, CBASS (cyclic oligonucleotide-based antiphage signaling system) provides immunity against bacteriophage. The CD-NTase protein synthesizes cyclic nucleotides in response to infection; these serve as specific second messenger signals. The signals activate a diverse range of effectors, leading to bacterial cell death and thus abortive phage infection. A type III-C(AAA) CBASS system. Its function is as follows. A member of the CBASS system in this bacteria. It does not seem to bind a closure peptide, its exact function is unknown. This Pseudomonas aeruginosa protein is CD-NTase-associated protein 8.